A 115-amino-acid polypeptide reads, in one-letter code: NAD(P)H-quinone oxidoreductase subunit M (115 aa).

It belongs to the complex I NdhM subunit family. As to quaternary structure, NDH-1 can be composed of about 15 different subunits; different subcomplexes with different compositions have been identified which probably have different functions.

It is found in the cellular thylakoid membrane. It carries out the reaction a plastoquinone + NADH + (n+1) H(+)(in) = a plastoquinol + NAD(+) + n H(+)(out). The catalysed reaction is a plastoquinone + NADPH + (n+1) H(+)(in) = a plastoquinol + NADP(+) + n H(+)(out). In terms of biological role, NDH-1 shuttles electrons from an unknown electron donor, via FMN and iron-sulfur (Fe-S) centers, to quinones in the respiratory and/or the photosynthetic chain. The immediate electron acceptor for the enzyme in this species is believed to be plastoquinone. Couples the redox reaction to proton translocation, and thus conserves the redox energy in a proton gradient. Cyanobacterial NDH-1 also plays a role in inorganic carbon-concentration. The chain is NAD(P)H-quinone oxidoreductase subunit M from Prochlorococcus marinus (strain NATL1A).